The sequence spans 628 residues: Alpha-L-arabinofuranosidase A (628 aa).

A signal peptide spans 1 to 25; that stretch reads MVAFSALSGVSAVSLLLSLVQNAHG. N-linked (GlcNAc...) asparagine glycans are attached at residues Asn36, Asn51, Asn74, Asn152, Asn171, Asn260, Asn359, Asn440, Asn493, and Asn610.

Belongs to the glycosyl hydrolase 51 family.

It carries out the reaction Hydrolysis of terminal non-reducing alpha-L-arabinofuranoside residues in alpha-L-arabinosides.. It functions in the pathway glycan metabolism; L-arabinan degradation. Its function is as follows. Acts only on small linear 1,5-alpha-linked L-arabinofuranosyl oligosaccharides. The protein is Alpha-L-arabinofuranosidase A (abfA) of Aspergillus niger.